The primary structure comprises 150 residues: MGRGRVEMKRIENKINRQVTFSKRRAGLLKKAHEISILCDAEVSLIVFSHKGKLFEYSSESCMEKVLERYERYSYAEKQLKAPDSHVNAQTNWSMEYSRLKAKIELWERNQRHYLGEDLESISIKELQNLEQQLDTSLKHIRSRKNQLMH.

In terms of domain architecture, MADS-box spans 1-61; sequence MGRGRVEMKR…GKLFEYSSES (61 aa). The region spanning 90–150 is the K-box; partial domain; sequence QTNWSMEYSR…IRSRKNQLMH (61 aa).

In terms of assembly, homodimer capable of binding to CArG-box sequences. Expressed in some of the meristems of arrest-stage cauliflower heads.

It localises to the nucleus. Probable transcription factor that promotes early floral meristem identity in synergy with APETALA1, FRUITFULL and LEAFY. Is required subsequently for the transition of an inflorescence meristem into a floral meristem. Seems to be partially redundant to the function of APETALA1. This is Truncated transcription factor CAULIFLOWER A (CAL-A) from Brassica oleracea var. botrytis (Cauliflower).